A 457-amino-acid polypeptide reads, in one-letter code: tRNA-2-methylthio-N(6)-dimethylallyladenosine synthase (457 aa).

Residues 3–120 form the MTTase N-terminal domain; the sequence is KKVYVKTFGC…LPQMIDQRRA (118 aa). [4Fe-4S] cluster-binding residues include cysteine 12, cysteine 49, cysteine 83, cysteine 157, cysteine 161, and cysteine 164. Residues 143-377 enclose the Radical SAM core domain; that stretch reads RVEGPSAFVS…QATIEENVAR (235 aa). The 68-residue stretch at 380–447 folds into the TRAM domain; it reads RSMVGKVERI…PHSLRGELLL (68 aa).

Belongs to the methylthiotransferase family. MiaB subfamily. In terms of assembly, monomer. The cofactor is [4Fe-4S] cluster.

The protein resides in the cytoplasm. It catalyses the reaction N(6)-dimethylallyladenosine(37) in tRNA + (sulfur carrier)-SH + AH2 + 2 S-adenosyl-L-methionine = 2-methylsulfanyl-N(6)-dimethylallyladenosine(37) in tRNA + (sulfur carrier)-H + 5'-deoxyadenosine + L-methionine + A + S-adenosyl-L-homocysteine + 2 H(+). In terms of biological role, catalyzes the methylthiolation of N6-(dimethylallyl)adenosine (i(6)A), leading to the formation of 2-methylthio-N6-(dimethylallyl)adenosine (ms(2)i(6)A) at position 37 in tRNAs that read codons beginning with uridine. The chain is tRNA-2-methylthio-N(6)-dimethylallyladenosine synthase from Burkholderia ambifaria (strain ATCC BAA-244 / DSM 16087 / CCUG 44356 / LMG 19182 / AMMD) (Burkholderia cepacia (strain AMMD)).